Here is a 330-residue protein sequence, read N- to C-terminus: 5'-AMP-activated protein kinase subunit gamma-1 (330 aa).

Low complexity predominate over residues methionine 1 to proline 12. The segment at methionine 1–serine 25 is disordered. 3 CBS domains span residues proline 42–leucine 102, serine 124–glutamate 186, and isoleucine 197–valine 259. Residues arginine 69, methionine 84 to aspartate 89, valine 129, histidine 150 to arginine 151, and lysine 169 each bind ADP. Residues arginine 69, methionine 84–aspartate 89, valine 129, histidine 150, histidine 150–arginine 151, lysine 169, threonine 199, alanine 204, serine 225–alanine 226, and serine 241–aspartate 244 contribute to the AMP site. ATP contacts are provided by residues arginine 69, methionine 84–aspartate 89, valine 129, histidine 150–arginine 151, arginine 151, and lysine 169. An AMPK pseudosubstrate motif is present at residues leucine 137–glutamate 158. Serine 241–aspartate 244 serves as a coordination point for ADP. Serine 241–aspartate 244 lines the ATP pocket. Residue serine 260 is modified to Phosphoserine; by ULK1. Threonine 262 bears the Phosphothreonine; by ULK1 mark. Arginine 268 serves as a coordination point for ADP. Arginine 268 lines the AMP pocket. Residue arginine 268 participates in ATP binding. Serine 269 carries the post-translational modification Phosphoserine; by ULK1. Residues tyrosine 271–lysine 328 enclose the CBS 4 domain. ADP contacts are provided by residues leucine 276 and histidine 297–arginine 298. Residues leucine 276, histidine 297, histidine 297–arginine 298, and serine 313–aspartate 316 each bind AMP. ATP-binding positions include leucine 276 and histidine 297–arginine 298.

This sequence belongs to the 5'-AMP-activated protein kinase gamma subunit family. AMPK is a heterotrimer of an alpha catalytic subunit (PRKAA1 or PRKAA2), a beta (PRKAB1 or PRKAB2) and a gamma non-catalytic subunits (PRKAG1, PRKAG2 or PRKAG3). Interacts with FNIP1 and FNIP2. In terms of processing, phosphorylated by ULK1 and ULK2; leading to negatively regulate AMPK activity and suggesting the existence of a regulatory feedback loop between ULK1, ULK2 and AMPK. There is some ambiguity for a phosphosite: Ser-260/Thr-262. Glycosylated; O-GlcNAcylated by OGT, promoting the AMP-activated protein kinase (AMPK) activity. As to expression, highly expressed in heart and brain, also found in kidney, white adipose tissue, lung and spleen.

AMP/ATP-binding subunit of AMP-activated protein kinase (AMPK), an energy sensor protein kinase that plays a key role in regulating cellular energy metabolism. In response to reduction of intracellular ATP levels, AMPK activates energy-producing pathways and inhibits energy-consuming processes: inhibits protein, carbohydrate and lipid biosynthesis, as well as cell growth and proliferation. AMPK acts via direct phosphorylation of metabolic enzymes, and by longer-term effects via phosphorylation of transcription regulators. Also acts as a regulator of cellular polarity by remodeling the actin cytoskeleton; probably by indirectly activating myosin. Gamma non-catalytic subunit mediates binding to AMP, ADP and ATP, leading to activate or inhibit AMPK: AMP-binding results in allosteric activation of alpha catalytic subunit (PRKAA1 or PRKAA2) both by inducing phosphorylation and preventing dephosphorylation of catalytic subunits. ADP also stimulates phosphorylation, without stimulating already phosphorylated catalytic subunit. ATP promotes dephosphorylation of catalytic subunit, rendering the AMPK enzyme inactive. This is 5'-AMP-activated protein kinase subunit gamma-1 (Prkag1) from Rattus norvegicus (Rat).